Consider the following 427-residue polypeptide: Glutamate-1-semialdehyde 2,1-aminomutase (427 aa).

The residue at position 265 (Lys265) is an N6-(pyridoxal phosphate)lysine.

Belongs to the class-III pyridoxal-phosphate-dependent aminotransferase family. HemL subfamily. As to quaternary structure, homodimer. It depends on pyridoxal 5'-phosphate as a cofactor.

Its subcellular location is the cytoplasm. It catalyses the reaction (S)-4-amino-5-oxopentanoate = 5-aminolevulinate. Its pathway is porphyrin-containing compound metabolism; protoporphyrin-IX biosynthesis; 5-aminolevulinate from L-glutamyl-tRNA(Glu): step 2/2. This Idiomarina loihiensis (strain ATCC BAA-735 / DSM 15497 / L2-TR) protein is Glutamate-1-semialdehyde 2,1-aminomutase.